The chain runs to 306 residues: D-alanine--D-alanine ligase (306 aa).

An ATP-grasp domain is found at 101–303 (KQVWQGIGLT…FSQLVVKILE (203 aa)). 134–189 (VADLGLPLIVKPSLEGSSVGMTKVNEISELRGALEAAFRYDVDLLVEKWLHGPEYT) is an ATP binding site. Mg(2+) contacts are provided by aspartate 257, glutamate 270, and asparagine 272.

The protein belongs to the D-alanine--D-alanine ligase family. Requires Mg(2+) as cofactor. It depends on Mn(2+) as a cofactor.

The protein localises to the cytoplasm. It carries out the reaction 2 D-alanine + ATP = D-alanyl-D-alanine + ADP + phosphate + H(+). It functions in the pathway cell wall biogenesis; peptidoglycan biosynthesis. Cell wall formation. The chain is D-alanine--D-alanine ligase from Photorhabdus laumondii subsp. laumondii (strain DSM 15139 / CIP 105565 / TT01) (Photorhabdus luminescens subsp. laumondii).